We begin with the raw amino-acid sequence, 107 residues long: Heme-degrading monooxygenase (107 aa).

One can recognise an ABM domain in the interval 2 to 94; sequence IIVTNTAKIT…YILDNKISYY (93 aa). Residue N6 participates in Fe cation binding. H76 is a heme binding site.

Belongs to the antibiotic biosynthesis monooxygenase family. Heme-degrading monooxygenase IsdG subfamily. As to quaternary structure, homodimer.

Its subcellular location is the cytoplasm. The enzyme catalyses heme b + 3 reduced [NADPH--hemoprotein reductase] + 3 O2 = biliverdin IXalpha + CO + Fe(2+) + 3 oxidized [NADPH--hemoprotein reductase] + 3 H2O + H(+). In terms of biological role, allows bacterial pathogens to use the host heme as an iron source. Catalyzes the oxidative degradation of the heme macrocyclic porphyrin ring to the biliverdin in the presence of a suitable electron donor such as ascorbate or NADPH--cytochrome P450 reductase, with subsequent release of free iron. The protein is Heme-degrading monooxygenase of Bacillus cereus (strain AH187).